We begin with the raw amino-acid sequence, 711 residues long: Hydroperoxide isomerase ALOXE3 (711 aa).

In terms of domain architecture, PLAT spans 2–119 (AVYRLCVTTG…TVELRPGTAR (118 aa)). Residues 119-711 (RTICQDALPL…PPLIENSVSI (593 aa)) form the Lipoxygenase domain. Fe cation contacts are provided by His408, His413, His588, Asn592, and Ile711.

This sequence belongs to the lipoxygenase family. Requires Fe cation as cofactor.

The protein resides in the cytoplasm. The catalysed reaction is a hydroperoxyeicosatetraenoate = a hydroxy-epoxy-eicosatetraenoate. It catalyses the reaction a hydroperoxyeicosatetraenoate = an oxoeicosatetraenoate + H2O. It carries out the reaction (12R)-hydroperoxy-(5Z,8Z,10E,14Z)-eicosatetraenoate = (8R)-hydroxy-(11R,12R)-epoxy-(5Z,9E,14Z)-eicosatrienoate. The enzyme catalyses (12S)-hydroperoxy-(5Z,8Z,10E,14Z)-eicosatetraenoate = (8R)-hydroxy-(11S,12S)-epoxy-(5Z,9E,14Z)-eicosatrienoate. The catalysed reaction is (12S)-hydroperoxy-(5Z,8Z,10E,14Z)-eicosatetraenoate = (10R)-hydroxy-(11S,12S)-epoxy-(5Z,8Z,14Z)-eicosatrienoate. It catalyses the reaction (15S)-hydroperoxy-(5Z,8Z,11Z,13E)-eicosatetraenoate = (13R)-hydroxy-(14S,15S)-epoxy-(5Z,8Z,11Z)-eicosatrienoate. It carries out the reaction (5S)-hydroperoxy-(6E,8Z,11Z,14Z)-eicosatetraenoate = 7R-hydroxy-5S,6S-epoxy-(8Z,11Z,14Z)-eicosatrienoate. The enzyme catalyses (13S)-hydroperoxy-(9Z,11E)-octadecadienoate = 11-hydroxy-(12S,13S)-epoxy-(9Z)-octadecenoate. The catalysed reaction is N-[omega-(9R)-hydroperoxy-(10E,12Z)-octadecadienoyloxy]acyl-beta-D-glucosyl-(1&lt;-&gt;1)-octadecasphing-4E-enine = a N-[omega-(9R,10R)-epoxy-(13R)-hydroxy-(11E)-octadecenoyloxy]acyl-beta-D-glucosyl-(1&lt;-&gt;1)-sphing-4E-enine. It catalyses the reaction a N-[omega-(9R)-hydroperoxy-(10E,12Z)-octadecadienoyloxy]-acylsphin-4E-enine = a N-[omega-(9R,10R)-epoxy-(13R)-hydroxy-(11E)-octadecenoyloxy]-acylsphing-4E-enine. It carries out the reaction (12R)-hydroperoxy-(5Z,8Z,10E,14Z)-eicosatetraenoate = 12-oxo-(5Z,8Z,10E,14Z)-eicosatetraenoate + H2O. The enzyme catalyses (12S)-hydroperoxy-(5Z,8Z,10E,14Z)-eicosatetraenoate = 12-oxo-(5Z,8Z,10E,14Z)-eicosatetraenoate + H2O. The catalysed reaction is (15S)-hydroperoxy-(5Z,8Z,11Z,13E)-eicosatetraenoate = 15-oxo-(5Z,8Z,11Z,13E)-eicosatetraenoate + H2O. It catalyses the reaction (13S)-hydroperoxy-(9Z,11E)-octadecadienoate = 13-oxo-(9Z,11E)-octadecadienoate + H2O. It carries out the reaction (8S)-hydroperoxy-(5Z,9E,11Z,14Z)-eicosatetraenoate = (10R)-hydroxy-(8S,9S)-epoxy-(5Z,11Z,14Z)-eicosatrienoate. The enzyme catalyses (8R)-hydroperoxy-(5Z,9E,11Z,14Z)-eicosatetraenoate = 8-oxo-(5Z,9E,11Z,14Z)-eicosatetraenoate + H2O. The catalysed reaction is (8S)-hydroperoxy-(5Z,9E,11Z,14Z)-eicosatetraenoate = 8-oxo-(5Z,9E,11Z,14Z)-eicosatetraenoate + H2O. It participates in lipid metabolism; hydroperoxy eicosatetraenoic acid biosynthesis. It functions in the pathway lipid metabolism; sphingolipid metabolism. Its function is as follows. Non-heme iron-containing lipoxygenase which is atypical in that it displays a prominent hydroperoxide isomerase activity and a reduced lipoxygenases activity. The hydroperoxide isomerase activity catalyzes the isomerization of hydroperoxides, derived from arachidonic and linoleic acid by ALOX12B, into hepoxilin-type epoxyalcohols and ketones. In presence of oxygen, oxygenates polyunsaturated fatty acids, including arachidonic acid, to produce fatty acid hydroperoxides. In the skin, acts downstream of ALOX12B on the linoleate moiety of esterified omega-hydroxyacyl-sphingosine (EOS) ceramides to produce an epoxy-ketone derivative, a crucial step in the conjugation of omega-hydroxyceramide to membrane proteins. Therefore plays a crucial role in the synthesis of corneocytes lipid envelope and the establishment of the skin barrier to water loss. In parallel, it may have a signaling function in barrier formation through the production of hepoxilins metabolites. Also plays a role in adipocyte differentiation through hepoxilin A3 and hepoxilin B3 production which in turn activate PPARG. Through the production of hepoxilins in the spinal cord, it may regulate inflammatory tactile allodynia. The sequence is that of Hydroperoxide isomerase ALOXE3 from Rattus norvegicus (Rat).